Reading from the N-terminus, the 421-residue chain is MALRSINKLEVFLKRYSAPTLYYCSNKSAHGATNGIGTDDSNNNYNNNNKNKNGYTGFSWRSVIRFFVPFSLGALASTMVAQREELTPTISARALSGRRREFNFIADVVAGCADSVVYIEIKDTRHFDYFSGQPITASNGSGFVIEQNGLILTNAHVVINKPNTMVQVRLSDGRTFPATIEDVDQTSDLATLRIQVNNLSVMKLGKSSTLRSGEWVVALGSPLALSNTVTAGVISSTQRASQELGLRNRDINYLQTDAAITFGNSGGPLVNLDGEAIGVNSMKVTAGISFAIPIDYVKVFLERAAARRRKGSAYKTGYPVKRYMGITMLTLTPDILFELKSRTQNMPNTLSHGVLVWKVIVGSPAHSGGLQPGDIVTHINKKEIKNSSDVYDALADGKKELDIVILRGVKQMRVTITPEDP.

A helical membrane pass occupies residues 63–81; it reads VIRFFVPFSLGALASTMVA. An IAP-binding motif is present at residues 74-77; sequence ALAS. The serine protease stretch occupies residues 138–301; it reads SNGSGFVIEQ…IPIDYVKVFL (164 aa). Active-site charge relay system residues include His156, Asp188, and Ser265. Positions 324 to 409 constitute a PDZ domain; sequence MGITMLTLTP…ELDIVILRGV (86 aa).

This sequence belongs to the peptidase S1C family. In terms of assembly, interacts with th/DIAP1 (via BIR 2 domain).

It localises to the mitochondrion intermembrane space. The protein localises to the mitochondrion membrane. It catalyses the reaction Cleavage of non-polar aliphatic amino-acids at the P1 position, with a preference for Val, Ile and Met. At the P2 and P3 positions, Arg is selected most strongly with a secondary preference for other hydrophilic residues.. Functionally, serine protease that shows proteolytic activity against a non-specific substrate beta-casein. Promotes or induces cell death either by direct binding to and inhibition of BIRC proteins (also called inhibitor of apoptosis proteins, IAPs), leading to an increase in caspase activity, or by a BIRC inhibition-independent, caspase-independent and serine protease activity-dependent mechanism. Can antagonize antiapoptotic activity of th/Diap1 by directly inducing the degradation of th/Diap1. This is Serine protease HTRA2, mitochondrial from Drosophila virilis (Fruit fly).